A 150-amino-acid polypeptide reads, in one-letter code: Ribonuclease H (150 aa).

Residues 1–142 (MSDSVELFTD…ADQLANRGVD (142 aa)) form the RNase H type-1 domain. 4 residues coordinate Mg(2+): D10, E48, D70, and D134.

This sequence belongs to the RNase H family. In terms of assembly, monomer. Requires Mg(2+) as cofactor.

Its subcellular location is the cytoplasm. It carries out the reaction Endonucleolytic cleavage to 5'-phosphomonoester.. Endonuclease that specifically degrades the RNA of RNA-DNA hybrids. The chain is Ribonuclease H from Pseudomonas syringae pv. syringae (strain B728a).